A 269-amino-acid polypeptide reads, in one-letter code: Tryptophan synthase alpha chain (269 aa).

Active-site proton acceptor residues include Glu49 and Asp60.

Belongs to the TrpA family. In terms of assembly, tetramer of two alpha and two beta chains.

It catalyses the reaction (1S,2R)-1-C-(indol-3-yl)glycerol 3-phosphate + L-serine = D-glyceraldehyde 3-phosphate + L-tryptophan + H2O. It participates in amino-acid biosynthesis; L-tryptophan biosynthesis; L-tryptophan from chorismate: step 5/5. Functionally, the alpha subunit is responsible for the aldol cleavage of indoleglycerol phosphate to indole and glyceraldehyde 3-phosphate. The protein is Tryptophan synthase alpha chain of Pseudomonas fluorescens (strain SBW25).